A 158-amino-acid polypeptide reads, in one-letter code: Non-secretory ribonuclease (158 aa).

The signal sequence occupies residues 1–27 (MVPKLFTSQICVLLLFGLLSVEVSLQV). Tryptophan 34 is a glycosylation site (C-linked (Man) tryptophan). Residue histidine 42 is the Proton acceptor of the active site. 4 disulfides stabilise this stretch: cysteine 50/cysteine 110, cysteine 64/cysteine 121, cysteine 82/cysteine 136, and cysteine 89/cysteine 98. Residue tyrosine 60 is modified to 3'-nitrotyrosine. 65 to 69 (KNQNT) is a substrate binding site. 3 N-linked (GlcNAc...) asparagine glycosylation sites follow: asparagine 86, asparagine 92, and asparagine 111. Histidine 153 acts as the Proton donor in catalysis.

This sequence belongs to the pancreatic ribonuclease family. Interacts with and forms a tight 1:1 complex with RNH1. Dimerization of two such complexes may occur.

It is found in the lysosome. It localises to the cytoplasmic granule. The enzyme catalyses an [RNA] containing cytidine + H2O = an [RNA]-3'-cytidine-3'-phosphate + a 5'-hydroxy-ribonucleotide-3'-[RNA].. It carries out the reaction an [RNA] containing uridine + H2O = an [RNA]-3'-uridine-3'-phosphate + a 5'-hydroxy-ribonucleotide-3'-[RNA].. This is a non-secretory ribonuclease. It is a pyrimidine specific nuclease with a slight preference for U. Cytotoxin and helminthotoxin. Possesses a wide variety of biological activities. The sequence is that of Non-secretory ribonuclease (RNASE2) from Saguinus oedipus (Cotton-top tamarin).